A 104-amino-acid chain; its full sequence is Gastrin (104 aa).

The signal sequence occupies residues 1–21 (MQRLCAYVLIHVLALAACSEA). Residues 22–58 (SWKPGFQLQDASSGPGANRGKEPHELDRLGPASHHRR) constitute a propeptide that is removed on maturation. The segment at 27 to 67 (FQLQDASSGPGANRGKEPHELDRLGPASHHRRQLGLQGPPH) is disordered. Positions 40-49 (RGKEPHELDR) are enriched in basic and acidic residues. At Gln59 the chain carries Pyrrolidone carboxylic acid; in form big gastrin. A Pyrrolidone carboxylic acid; in form gastrin modification is found at Gln76. Tyr87 is modified (sulfotyrosine; partial). At Phe92 the chain carries Phenylalanine amide. Phosphoserine is present on Ser96. The propeptide occupies 96–104 (SAEEGDQRP).

Belongs to the gastrin/cholecystokinin family. Post-translationally, sulfation enhances proteolytic processing, and blocks peptide degradation. Levels of sulfation differ between proteolytically-cleaved gastrins. Thus, gastrin-6 is almost 73% sulfated, whereas the larger gastrins are less than 50% sulfated. Sulfation levels are also tissue-specific.

The protein localises to the secreted. Functionally, gastrin stimulates the stomach mucosa to produce and secrete hydrochloric acid and the pancreas to secrete its digestive enzymes. It also stimulates smooth muscle contraction and increases blood circulation and water secretion in the stomach and intestine. The chain is Gastrin (GAST) from Sus scrofa (Pig).